Reading from the N-terminus, the 642-residue chain is Chaperone protein DnaK (642 aa).

Thr-200 carries the phosphothreonine; by autocatalysis modification. The span at 600–616 shows a compositional bias: low complexity; it reads EAAQQSAGAAGPMPGAP. The segment at 600–642 is disordered; it reads EAAQQSAGAAGPMPGAPAEEEPSDGPRKAKGRVVDAEIVDDDK. Basic and acidic residues predominate over residues 623–634; it reads DGPRKAKGRVVD.

This sequence belongs to the heat shock protein 70 family.

Functionally, acts as a chaperone. The chain is Chaperone protein DnaK from Akkermansia muciniphila (strain ATCC BAA-835 / DSM 22959 / JCM 33894 / BCRC 81048 / CCUG 64013 / CIP 107961 / Muc).